A 1956-amino-acid chain; its full sequence is MHLMCTGLRNEKLINDRKILYGECNLNIKSDSFIILLFKEIMNPFFIFQIFAMIVWSLDNYIEYTISILFITSISIILELKNTIKNQKKIKNMLNYTCPINVYRYNTSYIISSSELVPGDIYEIKNNMTIPCDTIILSGSVTMSEHMLTGESVPIHKERLPFEGNAIINKNNKYDSNDEKDDYLRIYNNHASINMIKRNHLIEETLGKKDREYKSNTHDLCSMNKLCYINNTYDDVHMKNNKMDYNNNNNNKKKKKINNLNFVKGTYINSNDLLYDDKIGVNIFEDDVNNMKHKFNQRNINYYNKDTNNLEYNNKHRYIYDCLLKKVEAISQKNKIIYSNEDINKYMLYGGTYVLSLYNINKIKYNNKEENRILGLVIKTGFITTKGKIVNNILYHKKKELNLINDSYKFLIILIIYALFSVFILLYITLSNNEYTNHIIIKCLDIITDAIPPALPTTLTVGISIAISRLKKKFSISCLCPHKINIAGQINTMVFDKTGTLTENNLQFIGIITQNKKNKNMLSDFIHIKEMNTESYIHSKDDNMIHNKNSIISEYYIKDNMKNLHTSSKKKSITKERSNFLVQTIKSCLLKDHYIKEKKKEYYTNNTYCNDLHINDSTCSSYLLNSETKDAYCEYYNIDHLCDINKKNMDINSKNELMGKYSKNELMGKTIKNELMGKYSKNELMGKYSKNELMGKYSKNELMGKYSKNELMGKYSKNELMGKTIKNQVGVDTNIYHMNCDNDYNYDYPCDYNCNNCNDTYHRLEYHNINKDNSFNIPPEKNKSYNNISEHIKINYPLLFEALACCHTLSKVNNKIMGDVLEILMFNFTNCDMLINNNSFIIKEKKKNCSYDFQKIDGDKNIGANDERCHLNNNLVSYNILKRFEFQSRLQRMSVIVKSTYGNNNDDNNDDDNNNDDDNNDDNNNDDNNNDDNNDDNNNNNYYYNIFCKGSPEKIKELCLKSKIPNNYDEILNKYTKQGMRILSISYKRVKSKNINLLNVKRSFVESNLHFLGFLIFTNNMKKNAPDIIHNLQTSGCQCIMSTGDNVLTSIHVAKKCGIINSNVESIIIGDVIPVVGKNNKQKKKLVWYNHKNDTYLKGHDKTCIDNEFTSIQSQMNSDNICGDNICGDNIYGDNICGDNIYGDNINGDNINGDNIYGDNINGDNINGDNINTYDNIYGDNYNLDYCPTEYHKCTYNNSILYRNNFLYKKENKKDKNYKNISTLYEHRTNDIQFDKLCDILINKDPRNVNIVLTGKAFIFLKKKFYSFHLPYYEECKNIVHYIMKKKHKKIKNIINNHNSNLYYHYNIIDTFVKRMNKEYMCFNKLLYKIQQKLLYNLIHNLYKKKKYMNNYYDIDEVHLIGNNNNNNNKNNSKEKKLPLKNKMKHIRKNESNDNITFNTYTSNNIHLSKYKYVHHKNYYYPDSCTNLRKKKNSLFYNLKKYIYYEKKKYLQHCLLKHDNYKKVELPRIKDINYSYQMESIKTRNFIHSLSEQFAFSNLILSFYIIKNDDNNVYNKNYIYNKNYIYNKNSICNKNYICNKNYIYNKNNIYNKNNIYNKKNILTHAKSVLLSGSSKKFLKFFSNIIRRHKLKEKKNKKNIKRYKMNHVNNTSKGHIILNMCTHGFKKDYSSLKNKYRIVNNKRYMLKNDNVYDRHMYNLTDMYRGTQYGCSKKKNKNIYMNNNNNILKNKINRFLEHLLVDKCKRNICHKYTDIKNIKLSIYEYILRTCTVYARMKPKDKSDLILSLKKLPNNSYVGMCGDGANDCLALSCADIGISLCNNNESSICSSFTSNKLCLHSIVHILIEGRASLVNSFQLFKFISLYSIMQCSQVLILYSISNKLTDNQYIFIDIVTILPLSIFMCWTSASEKLSKNIPIGKLFSFPILISIYGQIIIQLFFVMISLVVLMNLSFYKYDKNKVMKEKSDDTYLYKAQKYTLIYSLLFSKFVYVYIFKYKE.

The Cytoplasmic portion of the chain corresponds to 1-35; that stretch reads MHLMCTGLRNEKLINDRKILYGECNLNIKSDSFII. A helical membrane pass occupies residues 36 to 58; the sequence is LLFKEIMNPFFIFQIFAMIVWSL. The Extracellular portion of the chain corresponds to 59 to 61; the sequence is DNY. A helical transmembrane segment spans residues 62–80; sequence IEYTISILFITSISIILEL. Residues 81–407 are Cytoplasmic-facing; the sequence is KNTIKNQKKI…KKELNLINDS (327 aa). Residues 408-427 traverse the membrane as a helical segment; it reads YKFLIILIIYALFSVFILLY. Residues 428 to 440 lie on the Extracellular side of the membrane; that stretch reads ITLSNNEYTNHII. The helical transmembrane segment at 441–462 threads the bilayer; the sequence is IKCLDIITDAIPPALPTTLTVG. Residues 463–1818 are Cytoplasmic-facing; the sequence is ISIAISRLKK…SLVNSFQLFK (1356 aa). D496 acts as the 4-aspartylphosphate intermediate in catalysis. A disordered region spans residues 901-938; the sequence is YGNNNDDNNDDDNNNDDDNNDDNNNDDNNNDDNNDDNN. Residues 907–935 show a composition bias toward acidic residues; it reads DNNDDDNNNDDDNNDDNNNDDNNNDDNND. Mg(2+) contacts are provided by D1760 and D1764. Residues 1819-1837 form a helical membrane-spanning segment; sequence FISLYSIMQCSQVLILYSI. Topologically, residues 1838–1845 are extracellular; that stretch reads SNKLTDNQ. The chain crosses the membrane as a helical span at residues 1846-1863; it reads YIFIDIVTILPLSIFMCW. Topologically, residues 1864-1881 are cytoplasmic; sequence TSASEKLSKNIPIGKLFS. Residues 1882–1905 form a helical membrane-spanning segment; sequence FPILISIYGQIIIQLFFVMISLVV. The Extracellular segment spans residues 1906 to 1928; sequence LMNLSFYKYDKNKVMKEKSDDTY. Residues 1929 to 1952 traverse the membrane as a helical segment; sequence LYKAQKYTLIYSLLFSKFVYVYIF. Residues 1953-1956 lie on the Cytoplasmic side of the membrane; the sequence is KYKE.

This sequence belongs to the cation transport ATPase (P-type) (TC 3.A.3) family. Type V subfamily.

It localises to the membrane. It catalyses the reaction ATP + H2O = ADP + phosphate + H(+). In Plasmodium falciparum, this protein is Probable cation-transporting ATPase 1.